A 320-amino-acid chain; its full sequence is tRNA uridine(34) hydroxylase (320 aa).

Positions 123-217 constitute a Rhodanese domain; it reads EDENTVILDA…YGKDPETKGQ (95 aa). Cysteine 177 acts as the Cysteine persulfide intermediate in catalysis.

This sequence belongs to the TrhO family.

The enzyme catalyses uridine(34) in tRNA + AH2 + O2 = 5-hydroxyuridine(34) in tRNA + A + H2O. Catalyzes oxygen-dependent 5-hydroxyuridine (ho5U) modification at position 34 in tRNAs. The protein is tRNA uridine(34) hydroxylase of Staphylococcus epidermidis (strain ATCC 12228 / FDA PCI 1200).